Here is a 284-residue protein sequence, read N- to C-terminus: 2-dehydro-3-deoxyphosphooctonate aldolase (284 aa).

Belongs to the KdsA family.

The protein resides in the cytoplasm. The enzyme catalyses D-arabinose 5-phosphate + phosphoenolpyruvate + H2O = 3-deoxy-alpha-D-manno-2-octulosonate-8-phosphate + phosphate. Its pathway is carbohydrate biosynthesis; 3-deoxy-D-manno-octulosonate biosynthesis; 3-deoxy-D-manno-octulosonate from D-ribulose 5-phosphate: step 2/3. It participates in bacterial outer membrane biogenesis; lipopolysaccharide biosynthesis. This chain is 2-dehydro-3-deoxyphosphooctonate aldolase, found in Actinobacillus pleuropneumoniae serotype 7 (strain AP76).